The following is a 427-amino-acid chain: Flotillin-1 (427 aa).

Phosphoserine occurs at positions 19, 163, and 385. T387 carries the phosphothreonine modification.

This sequence belongs to the band 7/mec-2 family. Flotillin subfamily. As to quaternary structure, heterooligomeric complex of flotillin-1 and flotillin-2 and caveolin-1 and caveolin-2. Interacts with ECPAS.

It is found in the cell membrane. The protein localises to the endosome. It localises to the membrane. The protein resides in the caveola. Its subcellular location is the melanosome. It is found in the membrane raft. In terms of biological role, may act as a scaffolding protein within caveolar membranes, functionally participating in formation of caveolae or caveolae-like vesicles. The chain is Flotillin-1 (FLOT1) from Pongo abelii (Sumatran orangutan).